A 146-amino-acid chain; its full sequence is UPF0178 protein R01393 (146 aa).

It belongs to the UPF0178 family.

This chain is UPF0178 protein R01393, found in Rhizobium meliloti (strain 1021) (Ensifer meliloti).